We begin with the raw amino-acid sequence, 297 residues long: Bilin biosynthesis protein MpeU (297 aa).

This sequence belongs to the CpcE/RpcE/PecE family.

Its function is as follows. An enzyme involved in the biosynthesis of bilin. In Synechococcus sp. (strain WH8020), this protein is Bilin biosynthesis protein MpeU (mpeU).